The chain runs to 359 residues: Fructose-bisphosphate aldolase (359 aa).

Serine 50 serves as a coordination point for D-glyceraldehyde 3-phosphate. The active-site Proton donor is aspartate 83. Residues histidine 84, aspartate 105, glutamate 142, and histidine 198 each coordinate Zn(2+). Dihydroxyacetone phosphate is bound at residue glycine 199. Histidine 232 lines the Zn(2+) pocket. Dihydroxyacetone phosphate is bound by residues 233 to 235 and 275 to 278; these read GSS and NIDT.

Zn(2+) serves as cofactor.

It catalyses the reaction beta-D-fructose 1,6-bisphosphate = D-glyceraldehyde 3-phosphate + dihydroxyacetone phosphate. Its pathway is carbohydrate degradation; glycolysis; D-glyceraldehyde 3-phosphate and glycerone phosphate from D-glucose: step 4/4. Catalyzes the aldol condensation of dihydroxyacetone phosphate (DHAP or glycerone-phosphate) with glyceraldehyde 3-phosphate (G3P) to form fructose 1,6-bisphosphate (FBP) in gluconeogenesis and the reverse reaction in glycolysis. This is Fructose-bisphosphate aldolase from Nostoc sp. (strain PCC 7120 / SAG 25.82 / UTEX 2576).